The chain runs to 288 residues: Diaminopimelate epimerase (288 aa).

Substrate contacts are provided by Asn-17, Gln-47, and Asn-67. Cys-76 serves as the catalytic Proton donor. Substrate contacts are provided by residues 77–78 (GN), Asn-164, Asn-197, and 215–216 (ER). Cys-224 (proton acceptor) is an active-site residue. Substrate is bound at residue 225 to 226 (GS).

It belongs to the diaminopimelate epimerase family. As to quaternary structure, homodimer.

It localises to the cytoplasm. It catalyses the reaction (2S,6S)-2,6-diaminopimelate = meso-2,6-diaminopimelate. It functions in the pathway amino-acid biosynthesis; L-lysine biosynthesis via DAP pathway; DL-2,6-diaminopimelate from LL-2,6-diaminopimelate: step 1/1. In terms of biological role, catalyzes the stereoinversion of LL-2,6-diaminopimelate (L,L-DAP) to meso-diaminopimelate (meso-DAP), a precursor of L-lysine and an essential component of the bacterial peptidoglycan. The protein is Diaminopimelate epimerase of Rhodopseudomonas palustris (strain BisA53).